Consider the following 644-residue polypeptide: Chaperone protein DnaK (644 aa).

Thr-200 is modified (phosphothreonine; by autocatalysis). The disordered stretch occupies residues 603 to 644; that stretch reads VMAAEQAKSGGAAPGAAPGGAQQAAPDADVVDADFKEVDDKK. Residues 612-630 show a composition bias toward low complexity; it reads GGAAPGAAPGGAQQAAPDA. Residues 635–644 show a composition bias toward basic and acidic residues; the sequence is ADFKEVDDKK.

It belongs to the heat shock protein 70 family.

Acts as a chaperone. This chain is Chaperone protein DnaK, found in Polynucleobacter asymbioticus (strain DSM 18221 / CIP 109841 / QLW-P1DMWA-1) (Polynucleobacter necessarius subsp. asymbioticus).